The chain runs to 348 residues: Fructose-1,6-bisphosphatase class 1 (348 aa).

Residues Glu-92, Asp-111, Leu-113, and Asp-114 each coordinate Mg(2+). Residues 114–117 (DGSS) and Asn-204 contribute to the substrate site. Residue Glu-276 coordinates Mg(2+).

This sequence belongs to the FBPase class 1 family. As to quaternary structure, homotetramer. The cofactor is Mg(2+).

The protein localises to the cytoplasm. It catalyses the reaction beta-D-fructose 1,6-bisphosphate + H2O = beta-D-fructose 6-phosphate + phosphate. It participates in carbohydrate biosynthesis; gluconeogenesis. This chain is Fructose-1,6-bisphosphatase class 1, found in Methylorubrum extorquens (strain PA1) (Methylobacterium extorquens).